We begin with the raw amino-acid sequence, 286 residues long: 4-hydroxy-3-methylbut-2-enyl diphosphate reductase (286 aa).

Cysteine 12 contacts [4Fe-4S] cluster. Residues histidine 47 and histidine 80 each contribute to the (2E)-4-hydroxy-3-methylbut-2-enyl diphosphate site. Dimethylallyl diphosphate is bound by residues histidine 47 and histidine 80. Isopentenyl diphosphate is bound by residues histidine 47 and histidine 80. A [4Fe-4S] cluster-binding site is contributed by cysteine 102. Residue histidine 130 participates in (2E)-4-hydroxy-3-methylbut-2-enyl diphosphate binding. Histidine 130 contributes to the dimethylallyl diphosphate binding site. Residue histidine 130 participates in isopentenyl diphosphate binding. Glutamate 132 acts as the Proton donor in catalysis. Position 170 (threonine 170) interacts with (2E)-4-hydroxy-3-methylbut-2-enyl diphosphate. Cysteine 198 contacts [4Fe-4S] cluster. (2E)-4-hydroxy-3-methylbut-2-enyl diphosphate is bound by residues serine 226, asparagine 228, and serine 270. Dimethylallyl diphosphate is bound by residues serine 226, asparagine 228, and serine 270. Positions 226, 228, and 270 each coordinate isopentenyl diphosphate.

Belongs to the IspH family. It depends on [4Fe-4S] cluster as a cofactor.

It carries out the reaction isopentenyl diphosphate + 2 oxidized [2Fe-2S]-[ferredoxin] + H2O = (2E)-4-hydroxy-3-methylbut-2-enyl diphosphate + 2 reduced [2Fe-2S]-[ferredoxin] + 2 H(+). The catalysed reaction is dimethylallyl diphosphate + 2 oxidized [2Fe-2S]-[ferredoxin] + H2O = (2E)-4-hydroxy-3-methylbut-2-enyl diphosphate + 2 reduced [2Fe-2S]-[ferredoxin] + 2 H(+). Its pathway is isoprenoid biosynthesis; dimethylallyl diphosphate biosynthesis; dimethylallyl diphosphate from (2E)-4-hydroxy-3-methylbutenyl diphosphate: step 1/1. It participates in isoprenoid biosynthesis; isopentenyl diphosphate biosynthesis via DXP pathway; isopentenyl diphosphate from 1-deoxy-D-xylulose 5-phosphate: step 6/6. Catalyzes the conversion of 1-hydroxy-2-methyl-2-(E)-butenyl 4-diphosphate (HMBPP) into a mixture of isopentenyl diphosphate (IPP) and dimethylallyl diphosphate (DMAPP). Acts in the terminal step of the DOXP/MEP pathway for isoprenoid precursor biosynthesis. The polypeptide is 4-hydroxy-3-methylbut-2-enyl diphosphate reductase (Desulfovibrio desulfuricans (strain ATCC 27774 / DSM 6949 / MB)).